The sequence spans 297 residues: HTH-type transcriptional regulator ArgP (297 aa).

An HTH lysR-type domain is found at 4–60; the sequence is PDYRTLQALDAVIRERGFERAAQKLCITQSAVSQRIKQLENMFGQPLLVRTVPPRPT. The segment at residues 21-40 is a DNA-binding region (H-T-H motif); the sequence is FERAAQKLCITQSAVSQRIK.

The protein belongs to the LysR transcriptional regulatory family. In terms of assembly, homodimer.

Its function is as follows. Controls the transcription of genes involved in arginine and lysine metabolism. This Salmonella arizonae (strain ATCC BAA-731 / CDC346-86 / RSK2980) protein is HTH-type transcriptional regulator ArgP.